The sequence spans 342 residues: Nuclear distribution protein nudE homolog 1 (342 aa).

The stretch at 45–189 (REYEAELETQ…ELAVQQKQEK (145 aa)) forms a coiled coil. Positions 89 to 157 (EWYRQVSALE…ERNAFLESEL (69 aa)) are interaction with PAFAH1B1. 2 disordered regions span residues 182–203 (AVQQ…TERT) and 320–342 (GTRP…KMLL). The span at 322–342 (RPSSTPGPMSHPSQSVVKMLL) shows a compositional bias: polar residues.

It belongs to the nudE family. In terms of assembly, self-associates. Interacts with PAFAH1B1. Phosphorylated in mitosis.

It localises to the cytoplasm. The protein localises to the cytoskeleton. It is found in the microtubule organizing center. Its subcellular location is the centrosome. The protein resides in the spindle. It localises to the chromosome. The protein localises to the centromere. It is found in the kinetochore. Its subcellular location is the cleavage furrow. The protein resides in the cytoplasmic vesicle membrane. Its function is as follows. Required for centrosome duplication and formation and function of the mitotic spindle. This Gallus gallus (Chicken) protein is Nuclear distribution protein nudE homolog 1 (NDE1).